A 472-amino-acid polypeptide reads, in one-letter code: 6-phosphogluconate dehydrogenase, decarboxylating (472 aa).

NADP(+) contacts are provided by residues 10–15, 33–35, 74–76, and N102; these read GMAVMG, NRT, and VQA. Substrate contacts are provided by residues N102 and 128 to 130; that span reads SGG. Catalysis depends on K184, which acts as the Proton acceptor. A substrate-binding site is contributed by 187 to 188; the sequence is HN. E191 serves as the catalytic Proton donor. The substrate site is built by Y192, K262, R289, R447, and H453.

Belongs to the 6-phosphogluconate dehydrogenase family. Homodimer.

It catalyses the reaction 6-phospho-D-gluconate + NADP(+) = D-ribulose 5-phosphate + CO2 + NADPH. It functions in the pathway carbohydrate degradation; pentose phosphate pathway; D-ribulose 5-phosphate from D-glucose 6-phosphate (oxidative stage): step 3/3. In terms of biological role, catalyzes the oxidative decarboxylation of 6-phosphogluconate to ribulose 5-phosphate and CO(2), with concomitant reduction of NADP to NADPH. This is 6-phosphogluconate dehydrogenase, decarboxylating (gnd) from Lactococcus lactis subsp. lactis (strain IL1403) (Streptococcus lactis).